We begin with the raw amino-acid sequence, 217 residues long: Fucoxanthin-chlorophyll a-c binding protein B, chloroplastic (217 aa).

The transit peptide at 1–39 directs the protein to the chloroplast; sequence MKSAVMAVACAAAPGFRGPSAFNGAALTTSAKACSAMKM. 3 helical membrane passes run 81–101, 122–142, and 183–203; these read IAML…PGML, IPPA…LAVM, and GRAA…NNKP.

This sequence belongs to the fucoxanthin chlorophyll protein family. In terms of assembly, the LHC complex of chromophytic algae is composed of fucoxanthin, chlorophyll A and C bound non-covalently by fucoxanthin chlorophyll proteins (FCPs). The ratio of pigments in this LHC is; fucoxanthin: chlorophyll C: chlorophyll A; (0.6-1): (0.1-0.3): (1).

Its subcellular location is the plastid. The protein resides in the chloroplast thylakoid membrane. The light-harvesting complex (LHC) functions as a light receptor, it captures and delivers excitation energy to photosystems with which it is closely associated. Energy is transferred from the carotenoid and chlorophyll C (or B) to chlorophyll A and the photosynthetic reaction centers where it is used to synthesize ATP and reducing power. In Macrocystis pyrifera (Giant kelp), this protein is Fucoxanthin-chlorophyll a-c binding protein B, chloroplastic (FCPB).